We begin with the raw amino-acid sequence, 368 residues long: S-adenosylmethionine:tRNA ribosyltransferase-isomerase (368 aa).

This sequence belongs to the QueA family. As to quaternary structure, monomer.

The protein resides in the cytoplasm. It carries out the reaction 7-aminomethyl-7-carbaguanosine(34) in tRNA + S-adenosyl-L-methionine = epoxyqueuosine(34) in tRNA + adenine + L-methionine + 2 H(+). It functions in the pathway tRNA modification; tRNA-queuosine biosynthesis. In terms of biological role, transfers and isomerizes the ribose moiety from AdoMet to the 7-aminomethyl group of 7-deazaguanine (preQ1-tRNA) to give epoxyqueuosine (oQ-tRNA). This chain is S-adenosylmethionine:tRNA ribosyltransferase-isomerase, found in Methylorubrum extorquens (strain CM4 / NCIMB 13688) (Methylobacterium extorquens).